A 158-amino-acid polypeptide reads, in one-letter code: Phosphopantetheine adenylyltransferase (158 aa).

Thr9 contributes to the substrate binding site. Residues 9 to 10 (TF) and His17 contribute to the ATP site. 3 residues coordinate substrate: Lys41, Leu73, and Arg87. ATP-binding positions include 88-90 (GVR), Glu98, and 123-129 (WSYVSST).

This sequence belongs to the bacterial CoaD family. Homohexamer. It depends on Mg(2+) as a cofactor.

The protein localises to the cytoplasm. It catalyses the reaction (R)-4'-phosphopantetheine + ATP + H(+) = 3'-dephospho-CoA + diphosphate. The protein operates within cofactor biosynthesis; coenzyme A biosynthesis; CoA from (R)-pantothenate: step 4/5. Its function is as follows. Reversibly transfers an adenylyl group from ATP to 4'-phosphopantetheine, yielding dephospho-CoA (dPCoA) and pyrophosphate. This is Phosphopantetheine adenylyltransferase from Histophilus somni (strain 2336) (Haemophilus somnus).